Here is a 141-residue protein sequence, read N- to C-terminus: Hemoglobin subunit alpha (141 aa).

A Globin domain is found at 1-141; that stretch reads VLSPTDKTNV…VSTVLTSKYR (141 aa). Serine 3 carries the post-translational modification Phosphoserine. Position 7 is an N6-succinyllysine (lysine 7). The residue at position 8 (threonine 8) is a Phosphothreonine. N6-succinyllysine is present on lysine 11. Tyrosine 24 is subject to Phosphotyrosine. Phosphoserine is present on serine 35. At lysine 40 the chain carries N6-succinyllysine. The residue at position 49 (serine 49) is a Phosphoserine. Histidine 58 is an O2 binding site. Histidine 87 contributes to the heme b binding site. Serine 102 bears the Phosphoserine mark. Residue threonine 108 is modified to Phosphothreonine. Phosphoserine is present on serine 124. Phosphothreonine occurs at positions 134 and 137. Serine 138 is subject to Phosphoserine.

The protein belongs to the globin family. Heterotetramer of two alpha chains and two beta chains. As to expression, red blood cells.

Functionally, involved in oxygen transport from the lung to the various peripheral tissues. In terms of biological role, hemopressin acts as an antagonist peptide of the cannabinoid receptor CNR1. Hemopressin-binding efficiently blocks cannabinoid receptor CNR1 and subsequent signaling. The sequence is that of Hemoglobin subunit alpha (HBA) from Rhinoceros unicornis (Greater Indian rhinoceros).